We begin with the raw amino-acid sequence, 388 residues long: Galactokinase (388 aa).

Residue 33-36 coordinates substrate; it reads EHTD. ATP is bound by residues Ser67 and 124-130; that span reads GSGLSSS. 2 residues coordinate Mg(2+): Ser130 and Glu162. Asp174 serves as the catalytic Proton acceptor. Position 224 (Tyr224) interacts with substrate.

The protein belongs to the GHMP kinase family. GalK subfamily.

Its subcellular location is the cytoplasm. It carries out the reaction alpha-D-galactose + ATP = alpha-D-galactose 1-phosphate + ADP + H(+). It functions in the pathway carbohydrate metabolism; galactose metabolism. Its function is as follows. Catalyzes the transfer of the gamma-phosphate of ATP to D-galactose to form alpha-D-galactose-1-phosphate (Gal-1-P). This is Galactokinase from Streptococcus thermophilus.